Here is a 189-residue protein sequence, read N- to C-terminus: Threonylcarbamoyl-AMP synthase (189 aa).

One can recognise a YrdC-like domain in the interval 7 to 189; it reads NPRVNYAANM…LLTGQVVRPS (183 aa).

Belongs to the SUA5 family. TsaC subfamily.

It localises to the cytoplasm. The catalysed reaction is L-threonine + hydrogencarbonate + ATP = L-threonylcarbamoyladenylate + diphosphate + H2O. Required for the formation of a threonylcarbamoyl group on adenosine at position 37 (t(6)A37) in tRNAs that read codons beginning with adenine. Catalyzes the conversion of L-threonine, HCO(3)(-)/CO(2) and ATP to give threonylcarbamoyl-AMP (TC-AMP) as the acyladenylate intermediate, with the release of diphosphate. This is Threonylcarbamoyl-AMP synthase from Cellvibrio japonicus (strain Ueda107) (Pseudomonas fluorescens subsp. cellulosa).